Reading from the N-terminus, the 254-residue chain is Phosphoribosylaminoimidazole-succinocarboxamide synthase (254 aa).

Belongs to the SAICAR synthetase family.

The enzyme catalyses 5-amino-1-(5-phospho-D-ribosyl)imidazole-4-carboxylate + L-aspartate + ATP = (2S)-2-[5-amino-1-(5-phospho-beta-D-ribosyl)imidazole-4-carboxamido]succinate + ADP + phosphate + 2 H(+). The protein operates within purine metabolism; IMP biosynthesis via de novo pathway; 5-amino-1-(5-phospho-D-ribosyl)imidazole-4-carboxamide from 5-amino-1-(5-phospho-D-ribosyl)imidazole-4-carboxylate: step 1/2. The protein is Phosphoribosylaminoimidazole-succinocarboxamide synthase of Bartonella quintana (strain Toulouse) (Rochalimaea quintana).